A 113-amino-acid polypeptide reads, in one-letter code: ATP-dependent Clp protease adapter protein ClpS (113 aa).

The protein belongs to the ClpS family. Binds to the N-terminal domain of the chaperone ClpA.

In terms of biological role, involved in the modulation of the specificity of the ClpAP-mediated ATP-dependent protein degradation. The polypeptide is ATP-dependent Clp protease adapter protein ClpS (Corynebacterium diphtheriae (strain ATCC 700971 / NCTC 13129 / Biotype gravis)).